The following is a 267-amino-acid chain: Lectin SfL-1 (267 aa).

A run of 4 repeats spans residues Gly1 to Asp67, Ser68 to Gly135, Asp136 to Gly202, and Ser203 to Ile267. Positions Gly1 to Ile267 are 4 X approximate tandem repeats.

As to quaternary structure, monomer.

Its function is as follows. Lectin specific for high mannose N-glycans, recognizes the branched moiety of these glycans. Does not recognize other types of N-glycans or monosaccharides. The chain is Lectin SfL-1 from Solieria filiformis (Red alga).